We begin with the raw amino-acid sequence, 268 residues long: Indole-3-glycerol phosphate synthase (268 aa).

This sequence belongs to the TrpC family.

It carries out the reaction 1-(2-carboxyphenylamino)-1-deoxy-D-ribulose 5-phosphate + H(+) = (1S,2R)-1-C-(indol-3-yl)glycerol 3-phosphate + CO2 + H2O. It functions in the pathway amino-acid biosynthesis; L-tryptophan biosynthesis; L-tryptophan from chorismate: step 4/5. The chain is Indole-3-glycerol phosphate synthase from Parafrankia sp. (strain EAN1pec).